Consider the following 552-residue polypeptide: uncharacterized protein (552 aa).

One can recognise a DhaL domain in the interval Lys-8 to Lys-200.

This is an uncharacterized protein from Staphylococcus haemolyticus (strain JCSC1435).